Here is a 133-residue protein sequence, read N- to C-terminus: Nickel-responsive regulator (133 aa).

Positions 76, 87, 89, and 95 each coordinate Ni(2+).

Belongs to the transcriptional regulatory CopG/NikR family. As to quaternary structure, homotetramer. The cofactor is Ni(2+).

Transcriptional repressor of the nikABCDE operon. Is active in the presence of excessive concentrations of intracellular nickel. This chain is Nickel-responsive regulator, found in Shigella dysenteriae serotype 1 (strain Sd197).